A 196-amino-acid polypeptide reads, in one-letter code: ATP-dependent Clp protease proteolytic subunit (196 aa).

Ser-101 (nucleophile) is an active-site residue. Residue His-126 is part of the active site.

The protein belongs to the peptidase S14 family. In terms of assembly, component of the chloroplastic Clp protease core complex.

It localises to the plastid. The protein localises to the chloroplast stroma. It catalyses the reaction Hydrolysis of proteins to small peptides in the presence of ATP and magnesium. alpha-casein is the usual test substrate. In the absence of ATP, only oligopeptides shorter than five residues are hydrolyzed (such as succinyl-Leu-Tyr-|-NHMec, and Leu-Tyr-Leu-|-Tyr-Trp, in which cleavage of the -Tyr-|-Leu- and -Tyr-|-Trp bonds also occurs).. Cleaves peptides in various proteins in a process that requires ATP hydrolysis. Has a chymotrypsin-like activity. Plays a major role in the degradation of misfolded proteins. This chain is ATP-dependent Clp protease proteolytic subunit, found in Pleurastrum terricola (Filamentous green alga).